The chain runs to 138 residues: MQHTFALIKPDAVQRNLIGAIINMIEKNDFYISAMKMLQMNRQQAEGFYSVHRERPFFNELVDYMISGPIVSLILTGENAVTRYRELMGATNPQNAQEGTIRKSFAISLMENAVHGSDSDENAIIEINYFFNAFERIR.

Positions 9, 57, 85, 91, 102, and 112 each coordinate ATP. His-115 functions as the Pros-phosphohistidine intermediate in the catalytic mechanism.

The protein belongs to the NDK family. As to quaternary structure, homotetramer. It depends on Mg(2+) as a cofactor.

It is found in the cytoplasm. The catalysed reaction is a 2'-deoxyribonucleoside 5'-diphosphate + ATP = a 2'-deoxyribonucleoside 5'-triphosphate + ADP. It carries out the reaction a ribonucleoside 5'-diphosphate + ATP = a ribonucleoside 5'-triphosphate + ADP. Major role in the synthesis of nucleoside triphosphates other than ATP. The ATP gamma phosphate is transferred to the NDP beta phosphate via a ping-pong mechanism, using a phosphorylated active-site intermediate. The polypeptide is Nucleoside diphosphate kinase (Lawsonia intracellularis (strain PHE/MN1-00)).